A 179-amino-acid polypeptide reads, in one-letter code: MEKIIIDTEQFQRTISRISHQIIEKHAILDNIILVGIKRRGAEIAEMLQKRISELAQISLPLMALDITFYRDDLNLTSKDPVYTGVEHQLNIEGKTVILIDDVLFTGRTIRAALDALLDFGRAKRIELVILVDRGHRELPIRADYVGKNIPTALNEQVQVRTEHYDGVSQVALIHSTNG.

Substrate contacts are provided by residues 39 to 40 (RR), 101 to 109 (DDVLFTGRT), R134, and V158. The PRPP-binding signature appears at 97–109 (VILIDDVLFTGRT).

It belongs to the purine/pyrimidine phosphoribosyltransferase family. PyrR subfamily.

It catalyses the reaction UMP + diphosphate = 5-phospho-alpha-D-ribose 1-diphosphate + uracil. Regulates the transcription of the pyrimidine nucleotide (pyr) operon in response to exogenous pyrimidines. Its function is as follows. Also displays a weak uracil phosphoribosyltransferase activity which is not physiologically significant. The chain is Bifunctional protein PyrR from Haemophilus ducreyi (strain 35000HP / ATCC 700724).